Here is a 212-residue protein sequence, read N- to C-terminus: 7-carboxy-7-deazaguanine synthase (212 aa).

Substrate-binding positions include 22–24 (LQG) and arginine 37. Positions 28-212 (NTGMPAVFVR…VQTHKWAGIE (185 aa)) constitute a Radical SAM core domain. Positions 41, 45, and 48 each coordinate [4Fe-4S] cluster. Mg(2+) is bound at residue threonine 50. A substrate-binding site is contributed by threonine 78. S-adenosyl-L-methionine is bound by residues glycine 80 and 122–124 (SPK).

It belongs to the radical SAM superfamily. 7-carboxy-7-deazaguanine synthase family. In terms of assembly, homodimer. Requires [4Fe-4S] cluster as cofactor. The cofactor is S-adenosyl-L-methionine. Mg(2+) serves as cofactor.

It carries out the reaction 6-carboxy-5,6,7,8-tetrahydropterin + H(+) = 7-carboxy-7-deazaguanine + NH4(+). The protein operates within purine metabolism; 7-cyano-7-deazaguanine biosynthesis. In terms of biological role, catalyzes the complex heterocyclic radical-mediated conversion of 6-carboxy-5,6,7,8-tetrahydropterin (CPH4) to 7-carboxy-7-deazaguanine (CDG), a step common to the biosynthetic pathways of all 7-deazapurine-containing compounds. This is 7-carboxy-7-deazaguanine synthase from Neisseria meningitidis serogroup B (strain ATCC BAA-335 / MC58).